The primary structure comprises 165 residues: ATP synthase subunit b (165 aa).

The chain crosses the membrane as a helical span at residues 11–31 (LIFWTIVNFLLLVFLLGKFAW).

It belongs to the ATPase B chain family. As to quaternary structure, F-type ATPases have 2 components, F(1) - the catalytic core - and F(0) - the membrane proton channel. F(1) has five subunits: alpha(3), beta(3), gamma(1), delta(1), epsilon(1). F(0) has three main subunits: a(1), b(2) and c(10-14). The alpha and beta chains form an alternating ring which encloses part of the gamma chain. F(1) is attached to F(0) by a central stalk formed by the gamma and epsilon chains, while a peripheral stalk is formed by the delta and b chains.

It localises to the cell membrane. Its function is as follows. F(1)F(0) ATP synthase produces ATP from ADP in the presence of a proton or sodium gradient. F-type ATPases consist of two structural domains, F(1) containing the extramembraneous catalytic core and F(0) containing the membrane proton channel, linked together by a central stalk and a peripheral stalk. During catalysis, ATP synthesis in the catalytic domain of F(1) is coupled via a rotary mechanism of the central stalk subunits to proton translocation. In terms of biological role, component of the F(0) channel, it forms part of the peripheral stalk, linking F(1) to F(0). The protein is ATP synthase subunit b of Elusimicrobium minutum (strain Pei191).